Here is an 80-residue protein sequence, read N- to C-terminus: Exodeoxyribonuclease 7 small subunit (80 aa).

This sequence belongs to the XseB family. As to quaternary structure, heterooligomer composed of large and small subunits.

The protein resides in the cytoplasm. It carries out the reaction Exonucleolytic cleavage in either 5'- to 3'- or 3'- to 5'-direction to yield nucleoside 5'-phosphates.. Its function is as follows. Bidirectionally degrades single-stranded DNA into large acid-insoluble oligonucleotides, which are then degraded further into small acid-soluble oligonucleotides. The chain is Exodeoxyribonuclease 7 small subunit from Pseudomonas entomophila (strain L48).